We begin with the raw amino-acid sequence, 331 residues long: Anthranilate phosphoribosyltransferase (331 aa).

Residues Gly78, 81–82, Ser86, 88–91, 106–114, and Ser118 contribute to the 5-phospho-alpha-D-ribose 1-diphosphate site; these read GD, NIST, and KHGNKSITS. Gly78 provides a ligand contact to anthranilate. Residue Ser90 participates in Mg(2+) binding. Asn109 contacts anthranilate. Arg163 lines the anthranilate pocket. Residues Asp222 and Glu223 each contribute to the Mg(2+) site.

Belongs to the anthranilate phosphoribosyltransferase family. In terms of assembly, homodimer. Requires Mg(2+) as cofactor.

The enzyme catalyses N-(5-phospho-beta-D-ribosyl)anthranilate + diphosphate = 5-phospho-alpha-D-ribose 1-diphosphate + anthranilate. The protein operates within amino-acid biosynthesis; L-tryptophan biosynthesis; L-tryptophan from chorismate: step 2/5. Functionally, catalyzes the transfer of the phosphoribosyl group of 5-phosphorylribose-1-pyrophosphate (PRPP) to anthranilate to yield N-(5'-phosphoribosyl)-anthranilate (PRA). This chain is Anthranilate phosphoribosyltransferase, found in Staphylococcus epidermidis (strain ATCC 35984 / DSM 28319 / BCRC 17069 / CCUG 31568 / BM 3577 / RP62A).